The primary structure comprises 138 residues: 1,4-dihydroxy-2-naphthoyl-CoA hydrolase (138 aa).

Asp16 is an active-site residue.

It belongs to the 4-hydroxybenzoyl-CoA thioesterase family. DHNA-CoA hydrolase subfamily.

It catalyses the reaction 1,4-dihydroxy-2-naphthoyl-CoA + H2O = 1,4-dihydroxy-2-naphthoate + CoA + H(+). Its pathway is cofactor biosynthesis; phylloquinone biosynthesis. The protein operates within quinol/quinone metabolism; 1,4-dihydroxy-2-naphthoate biosynthesis; 1,4-dihydroxy-2-naphthoate from chorismate: step 7/7. In terms of biological role, catalyzes the specific hydrolysis of 1,4-dihydroxy-2-naphthoyl-CoA (DHNA-CoA) to 1,4-dihydroxy-2-naphthoate (DHNA), a reaction involved in phylloquinone (vitamin K1) biosynthesis. Is not active on benzoyl-CoA, phenylacetyl-CoA and aliphatic acyl-CoA thioesters. The polypeptide is 1,4-dihydroxy-2-naphthoyl-CoA hydrolase (Synechocystis sp. (strain ATCC 27184 / PCC 6803 / Kazusa)).